Consider the following 154-residue polypeptide: Ecotin-like protein 2 (154 aa).

This sequence belongs to the protease inhibitor I11 (ecotin) family.

In Trypanosoma brucei brucei (strain 927/4 GUTat10.1), this protein is Ecotin-like protein 2.